Consider the following 211-residue polypeptide: Thiamine-phosphate synthase (211 aa).

Residues Q37 to K41 and N69 each bind 4-amino-2-methyl-5-(diphosphooxymethyl)pyrimidine. The Mg(2+) site is built by D70 and D89. S108 is a binding site for 4-amino-2-methyl-5-(diphosphooxymethyl)pyrimidine. Residue T134–T136 coordinates 2-[(2R,5Z)-2-carboxy-4-methylthiazol-5(2H)-ylidene]ethyl phosphate. Residue K137 participates in 4-amino-2-methyl-5-(diphosphooxymethyl)pyrimidine binding. 2-[(2R,5Z)-2-carboxy-4-methylthiazol-5(2H)-ylidene]ethyl phosphate contacts are provided by residues G166 and V186 to S187.

It belongs to the thiamine-phosphate synthase family. Requires Mg(2+) as cofactor.

The enzyme catalyses 2-[(2R,5Z)-2-carboxy-4-methylthiazol-5(2H)-ylidene]ethyl phosphate + 4-amino-2-methyl-5-(diphosphooxymethyl)pyrimidine + 2 H(+) = thiamine phosphate + CO2 + diphosphate. It catalyses the reaction 2-(2-carboxy-4-methylthiazol-5-yl)ethyl phosphate + 4-amino-2-methyl-5-(diphosphooxymethyl)pyrimidine + 2 H(+) = thiamine phosphate + CO2 + diphosphate. It carries out the reaction 4-methyl-5-(2-phosphooxyethyl)-thiazole + 4-amino-2-methyl-5-(diphosphooxymethyl)pyrimidine + H(+) = thiamine phosphate + diphosphate. The protein operates within cofactor biosynthesis; thiamine diphosphate biosynthesis; thiamine phosphate from 4-amino-2-methyl-5-diphosphomethylpyrimidine and 4-methyl-5-(2-phosphoethyl)-thiazole: step 1/1. Condenses 4-methyl-5-(beta-hydroxyethyl)thiazole monophosphate (THZ-P) and 2-methyl-4-amino-5-hydroxymethyl pyrimidine pyrophosphate (HMP-PP) to form thiamine monophosphate (TMP). This is Thiamine-phosphate synthase from Escherichia coli (strain SE11).